The primary structure comprises 343 residues: Holliday junction branch migration complex subunit RuvB (343 aa).

Residues 1–185 (MMNENLDATG…FGISSRLQYY (185 aa)) form a large ATPase domain (RuvB-L) region. ATP is bound by residues Leu24, Arg25, Gly66, Lys69, Thr70, Thr71, 132–134 (EDY), Arg175, Tyr185, and Arg222. Thr70 lines the Mg(2+) pocket. The interval 186 to 256 (STELLSGIVE…IAKFGLKALN (71 aa)) is small ATPAse domain (RuvB-S). The head domain (RuvB-H) stretch occupies residues 259-343 (AHGLDEMDNK…GSNQGGLFDN (85 aa)). Residues Arg314 and Arg319 each coordinate DNA.

It belongs to the RuvB family. Homohexamer. Forms an RuvA(8)-RuvB(12)-Holliday junction (HJ) complex. HJ DNA is sandwiched between 2 RuvA tetramers; dsDNA enters through RuvA and exits via RuvB. An RuvB hexamer assembles on each DNA strand where it exits the tetramer. Each RuvB hexamer is contacted by two RuvA subunits (via domain III) on 2 adjacent RuvB subunits; this complex drives branch migration. In the full resolvosome a probable DNA-RuvA(4)-RuvB(12)-RuvC(2) complex forms which resolves the HJ.

It is found in the cytoplasm. The enzyme catalyses ATP + H2O = ADP + phosphate + H(+). The RuvA-RuvB-RuvC complex processes Holliday junction (HJ) DNA during genetic recombination and DNA repair, while the RuvA-RuvB complex plays an important role in the rescue of blocked DNA replication forks via replication fork reversal (RFR). RuvA specifically binds to HJ cruciform DNA, conferring on it an open structure. The RuvB hexamer acts as an ATP-dependent pump, pulling dsDNA into and through the RuvAB complex. RuvB forms 2 homohexamers on either side of HJ DNA bound by 1 or 2 RuvA tetramers; 4 subunits per hexamer contact DNA at a time. Coordinated motions by a converter formed by DNA-disengaged RuvB subunits stimulates ATP hydrolysis and nucleotide exchange. Immobilization of the converter enables RuvB to convert the ATP-contained energy into a lever motion, pulling 2 nucleotides of DNA out of the RuvA tetramer per ATP hydrolyzed, thus driving DNA branch migration. The RuvB motors rotate together with the DNA substrate, which together with the progressing nucleotide cycle form the mechanistic basis for DNA recombination by continuous HJ branch migration. Branch migration allows RuvC to scan DNA until it finds its consensus sequence, where it cleaves and resolves cruciform DNA. The chain is Holliday junction branch migration complex subunit RuvB from Christiangramia forsetii (strain DSM 17595 / CGMCC 1.15422 / KT0803) (Gramella forsetii).